We begin with the raw amino-acid sequence, 368 residues long: MTRLYDFAPSNIRAIAPYQPGKPITELAREMGLKPGVIIKLASNENPLGVSPKAYAAMQDALEDIARYPDGNSFALRDCVCRKFKLQPDQLVFGNGSNDILELAARAFLTPGTEAVYAQHAFAVYALVTQATGASGISVPARDFGHDLDAMLAAITDKTRLFIANPNNPTGTLLSKPALRDFLAKVPRQVLVVLDEAYDEYLAAELKSEAFSWLAEFDNLLISRTLSKAYGLAGLRVGFGVTSPGVADLMNRVRQPFNVNSVAQAAAVAALEDDEFVERSYALNQAGMQQLTEGLARLGLSYIPSYGNFVSFHVAQAAEVYQQLLKRGVIVRPVAAYDMPDYLRVSIGLHAENARFLEVLEQILKTRT.

An N6-(pyridoxal phosphate)lysine modification is found at Lys-228.

Belongs to the class-II pyridoxal-phosphate-dependent aminotransferase family. Histidinol-phosphate aminotransferase subfamily. Homodimer. It depends on pyridoxal 5'-phosphate as a cofactor.

It carries out the reaction L-histidinol phosphate + 2-oxoglutarate = 3-(imidazol-4-yl)-2-oxopropyl phosphate + L-glutamate. It functions in the pathway amino-acid biosynthesis; L-histidine biosynthesis; L-histidine from 5-phospho-alpha-D-ribose 1-diphosphate: step 7/9. The chain is Histidinol-phosphate aminotransferase (hisC) from Methylobacillus flagellatus.